The chain runs to 276 residues: NH(3)-dependent NAD(+) synthetase (276 aa).

39-46 serves as a coordination point for ATP; it reads GLSGGVDS. Asp45 contributes to the Mg(2+) binding site. Position 123 (Arg123) interacts with deamido-NAD(+). Thr143 contacts ATP. Glu148 contacts Mg(2+). Lys156 and Asp163 together coordinate deamido-NAD(+). Positions 172 and 194 each coordinate ATP. 254–255 provides a ligand contact to deamido-NAD(+); it reads HK.

The protein belongs to the NAD synthetase family. In terms of assembly, homodimer.

It carries out the reaction deamido-NAD(+) + NH4(+) + ATP = AMP + diphosphate + NAD(+) + H(+). It participates in cofactor biosynthesis; NAD(+) biosynthesis; NAD(+) from deamido-NAD(+) (ammonia route): step 1/1. Its function is as follows. Catalyzes the ATP-dependent amidation of deamido-NAD to form NAD. Uses ammonia as a nitrogen source. The protein is NH(3)-dependent NAD(+) synthetase of Hyperthermus butylicus (strain DSM 5456 / JCM 9403 / PLM1-5).